Consider the following 698-residue polypeptide: D-(-)-3-hydroxybutyrate oligomer hydrolase (698 aa).

A signal peptide spans 1 to 32 (MTTIRGGSRRASLPALALLGVLLGACHSDDNA). Catalysis depends on S310, which acts as the Charge relay system.

It belongs to the D-(-)-3-hydroxybutyrate oligomer hydrolase family.

It is found in the secreted. The enzyme catalyses (3R)-hydroxybutanoate dimer + H2O = 2 (R)-3-hydroxybutanoate + H(+). The protein operates within lipid metabolism; butanoate metabolism. Functionally, participates in the degradation of poly-3-hydroxybutyrate (PHB). It works downstream of poly(3-hydroxybutyrate) depolymerase, hydrolyzing D(-)-3-hydroxybutyrate oligomers of various length (3HB-oligomers) into 3HB-monomers. In Burkholderia thailandensis (strain ATCC 700388 / DSM 13276 / CCUG 48851 / CIP 106301 / E264), this protein is D-(-)-3-hydroxybutyrate oligomer hydrolase.